The primary structure comprises 328 residues: 4-hydroxythreonine-4-phosphate dehydrogenase (328 aa).

His-133 and Thr-134 together coordinate substrate. His-163, His-208, and His-263 together coordinate a divalent metal cation. Residues Lys-271, Asn-280, and Arg-289 each contribute to the substrate site.

It belongs to the PdxA family. Homodimer. Zn(2+) serves as cofactor. Mg(2+) is required as a cofactor. Requires Co(2+) as cofactor.

Its subcellular location is the cytoplasm. It catalyses the reaction 4-(phosphooxy)-L-threonine + NAD(+) = 3-amino-2-oxopropyl phosphate + CO2 + NADH. Its pathway is cofactor biosynthesis; pyridoxine 5'-phosphate biosynthesis; pyridoxine 5'-phosphate from D-erythrose 4-phosphate: step 4/5. Its function is as follows. Catalyzes the NAD(P)-dependent oxidation of 4-(phosphooxy)-L-threonine (HTP) into 2-amino-3-oxo-4-(phosphooxy)butyric acid which spontaneously decarboxylates to form 3-amino-2-oxopropyl phosphate (AHAP). This Chromobacterium violaceum (strain ATCC 12472 / DSM 30191 / JCM 1249 / CCUG 213 / NBRC 12614 / NCIMB 9131 / NCTC 9757 / MK) protein is 4-hydroxythreonine-4-phosphate dehydrogenase.